The following is a 541-amino-acid chain: uncharacterized protein (541 aa).

A run of 5 helical transmembrane segments spans residues 10 to 32 (LNNQIFLLLLITLIGMTIGKINI), 39 to 57 (SSAIIFVGLFFGHFGYTLP), 62 to 84 (TLGLVLFIYSIGLQAGPGFFFSL), 91 to 113 (LSLGTVAIIGIGFLTTLATTYLF), and 146 to 168 (APAAYGVTYFFGIVGVIVFIQII). RCK C-terminal domains are found at residues 183 to 260 (LNKE…DDLE) and 268 to 352 (TPVD…IFGN). The next 6 helical transmembrane spans lie at 357–375 (SYNFNILPIFTGLFLGFIL), 385–407 (SGIFYLGTTGGVLIAGLFLSNIY), 428–447 (GLVLFMATIGTQTGTSILAT), 452–474 (GLQLSLAGILVTTVPLISSVFIC), 481–500 (PFLSMLGVITGAMTSTPGLA), and 515–537 (YATVYPVALISMIIYTKLLIFIV).

This sequence belongs to the AAE transporter (TC 2.A.81) family.

It is found in the cell membrane. This is an uncharacterized protein from Desulfotalea psychrophila (strain LSv54 / DSM 12343).